Here is a 277-residue protein sequence, read N- to C-terminus: Phosphonoacetaldehyde hydrolase (277 aa).

Asp-20 acts as the Nucleophile in catalysis. 2 residues coordinate Mg(2+): Asp-20 and Ala-22. Residue Lys-61 is the Schiff-base intermediate with substrate of the active site. Mg(2+) is bound at residue Asp-194.

It belongs to the HAD-like hydrolase superfamily. PhnX family. Homodimer. The cofactor is Mg(2+).

It catalyses the reaction phosphonoacetaldehyde + H2O = acetaldehyde + phosphate + H(+). Its function is as follows. Involved in phosphonate degradation. In Syntrophobacter fumaroxidans (strain DSM 10017 / MPOB), this protein is Phosphonoacetaldehyde hydrolase.